The chain runs to 556 residues: Genetic interactor of prohibitins 3, mitochondrial (556 aa).

Residues 1 to 21 (MLNLCHALRGVRQFSCSVIVK) constitute a mitochondrion transit peptide. Positions 113-305 (ESTLNDILNY…LFDLPGYSTS (193 aa)) constitute a CP-type G domain.

Belongs to the TRAFAC class YlqF/YawG GTPase family. GEP3 subfamily.

Its subcellular location is the mitochondrion. In terms of biological role, interacts genetically with prohibitins and thus may be involved in the mitochondrial lipid metabolism. The protein is Genetic interactor of prohibitins 3, mitochondrial (GEP3) of Saccharomyces cerevisiae (strain ATCC 204508 / S288c) (Baker's yeast).